The primary structure comprises 474 residues: Light-independent protochlorophyllide reductase subunit N (474 aa).

3 residues coordinate [4Fe-4S] cluster: C22, C47, and C107.

This sequence belongs to the BchN/ChlN family. As to quaternary structure, protochlorophyllide reductase is composed of three subunits; ChlL, ChlN and ChlB. Forms a heterotetramer of two ChlB and two ChlN subunits. Requires [4Fe-4S] cluster as cofactor.

The protein resides in the plastid. The protein localises to the chloroplast. It catalyses the reaction chlorophyllide a + oxidized 2[4Fe-4S]-[ferredoxin] + 2 ADP + 2 phosphate = protochlorophyllide a + reduced 2[4Fe-4S]-[ferredoxin] + 2 ATP + 2 H2O. Its pathway is porphyrin-containing compound metabolism; chlorophyll biosynthesis (light-independent). Functionally, component of the dark-operative protochlorophyllide reductase (DPOR) that uses Mg-ATP and reduced ferredoxin to reduce ring D of protochlorophyllide (Pchlide) to form chlorophyllide a (Chlide). This reaction is light-independent. The NB-protein (ChlN-ChlB) is the catalytic component of the complex. This is Light-independent protochlorophyllide reductase subunit N from Physcomitrium patens (Spreading-leaved earth moss).